Reading from the N-terminus, the 147-residue chain is Transthyretin (147 aa).

The N-terminal stretch at 1–20 is a signal peptide; sequence MASRRLLLLCLAGLVLVTEA. Cysteine 30 is subject to Sulfocysteine. Lysine 35 is an L-thyroxine binding site. 4-carboxyglutamate is present on glutamate 62. Residue glutamate 74 participates in L-thyroxine binding. The N-linked (GlcNAc...) asparagine glycan is linked to asparagine 118. Serine 137 provides a ligand contact to L-thyroxine.

It belongs to the transthyretin family. In terms of assembly, homotetramer. Dimer of dimers. In the homotetramer, subunits assemble around a central channel that can accommodate two ligand molecules. Interacts with RBP4. In terms of processing, sulfonation of the reactive cysteine Cys-30 enhances the stability of the native conformation of TTR, avoiding misassembly of the protein leading to amyloid formation. In terms of tissue distribution, detected in serum (at protein level). Detected in liver.

The protein resides in the secreted. Thyroid hormone-binding protein. Probably transports thyroxine from the bloodstream to the brain. This chain is Transthyretin (TTR), found in Sorex araneus (Eurasian common shrew).